The chain runs to 28 residues: Cruzioseptin-4 (28 aa).

Position 25 is a glutamic acid 1-amide (Glu-25). Positions 27–28 (EH) are excised as a propeptide.

As to expression, expressed by the skin glands.

Its subcellular location is the secreted. Functionally, has antimicrobial activity. The chain is Cruzioseptin-4 from Cruziohyla calcarifer (Splendid leaf frog).